A 360-amino-acid polypeptide reads, in one-letter code: Peptide chain release factor 1 (360 aa).

The residue at position 235 (glutamine 235) is an N5-methylglutamine. Residues methionine 283–arginine 308 are compositionally biased toward basic and acidic residues. Residues methionine 283 to proline 313 form a disordered region.

The protein belongs to the prokaryotic/mitochondrial release factor family. Methylated by PrmC. Methylation increases the termination efficiency of RF1.

The protein localises to the cytoplasm. Functionally, peptide chain release factor 1 directs the termination of translation in response to the peptide chain termination codons UAG and UAA. This chain is Peptide chain release factor 1, found in Yersinia enterocolitica serotype O:8 / biotype 1B (strain NCTC 13174 / 8081).